A 288-amino-acid chain; its full sequence is Pyridoxal kinase PdxY (288 aa).

Residues S12 and 47-48 (TQ) contribute to the substrate site. ATP contacts are provided by residues D114, E151, K184, and 211–214 (RPLL). D225 contacts substrate.

The protein belongs to the pyridoxine kinase family. PdxY subfamily. In terms of assembly, homodimer. Mg(2+) is required as a cofactor.

The catalysed reaction is pyridoxal + ATP = pyridoxal 5'-phosphate + ADP + H(+). It participates in cofactor metabolism; pyridoxal 5'-phosphate salvage; pyridoxal 5'-phosphate from pyridoxal: step 1/1. Functionally, pyridoxal kinase involved in the salvage pathway of pyridoxal 5'-phosphate (PLP). Catalyzes the phosphorylation of pyridoxal to PLP. The sequence is that of Pyridoxal kinase PdxY from Pseudomonas paraeruginosa (strain DSM 24068 / PA7) (Pseudomonas aeruginosa (strain PA7)).